A 252-amino-acid chain; its full sequence is Adapter protein MecA (252 aa).

The protein belongs to the MecA family. Homodimer.

Its function is as follows. Enables the recognition and targeting of unfolded and aggregated proteins to the ClpC protease or to other proteins involved in proteolysis. This chain is Adapter protein MecA, found in Streptococcus uberis (strain ATCC BAA-854 / 0140J).